The sequence spans 1504 residues: MATARTFGPEREAEPAKEARVVGSELVDTYTVYIIQVTDGSHEWTVKHRYSDFHDLHEKLVAERKIDKNLLPPKKIIGKNSRSLVEKREKDLEVYLQKLLAAFPGVTPRVLAHFLHFHFYEINGITAALAEELFEKGEQLLGAGEVFAIGPLQLYAVTEQLQQGKPTCASGDAKTDLGHILDFTCRLKYLKVSGTEGPFGTSNIQEQLLPFDLSIFKSLHQVEISHCDAKHIRGLVASKPTLATLSVRFSATSMKEVLVPEASEFDEWEPEGTTLEGPVTAVIPTWQALTTLDLSHNSVSEIDESVKLIPKIEFLDLSHNGLLVVDNLQHLYNLVHLDLSYNKLSSLEGLHTKLGNIKTLNLAGNLLESLSGLHKLYSLVNLDLRDNRIEQMEEVRSIGSLPCLEHVSLLNNPLSIIPDYRTKVLAQFGERASEVCLDDTVTTEKELDTVEVLKAIQKAKEVKSKLSNPEKKGGEDSRLSAAPCIRPSSSPPTVAPASASLPQPILSNQGIMFVQEEALASSLSSTDSLTPEHQPIAQGCSDSLESIPAGQAASDDLRDVPGAVGGASPEHAEPEVQVVPGSGQIIFLPFTCIGYTATNQDFIQRLSTLIRQAIERQLPAWIEAANQREEGQGEQGEEEDEEEEEEEDVAENRYFEMGPPDVEEEEGGGQGEEEEEEEEDEEAEEERLALEWALGADEDFLLEHIRILKVLWCFLIHVQGSIRQFAACLVLTDFGIAVFEIPHQESRGSSQHILSSLRFVFCFPHGDLTEFGFLMPELCLVLKVRHSENTLFIISDAANLHEFHADLRSCFAPQHMAMLCSPILYGSHTSLQEFLRQLLTFYKVAGGCQERSQGCFPVYLVYSDKRMVQTAAGDYSGNIEWASCTLCSAVRRSCCAPSEAVKSAAIPYWLLLTPQHLNVIKADFNPMPNRGTHNCRNRNSFKLSRVPLSTVLLDPTRSCTQPRGAFADGHVLELLVGYRFVTAIFVLPHEKFHFLRVYNQLRASLQDLKTVVIAKTPGTGGSPQGSFADGQPAERRASNDQRPQEVPAEALAPAPAEVPAPAPAAASASGPAKTPAPAEASTSALVPEETPVEAPAPPPAEAPAQYPSEHLIQATSEENQIPSHLPACPSLRHVASLRGSAIIELFHSSIAEVENEELRHLMWSSVVFYQTPGLEVTACVLLSTKAVYFVLHDGLRRYFSEPLQDFWHQKNTDYNNSPFHISQCFVLKLSDLQSVNVGLFDQHFRLTGSTPMQVVTCLTRDSYLTHCFLQHLMVVLSSLERTPSPEPVDKDFYSEFGNKTTGKMENYELIHSSRVKFTYPSEEEIGDLTFTVAQKMAEPEKAPALSILLYVQAFQVGMPPPGCCRGPLRPKTLLLTSSEIFLLDEDCVHYPLPEFAKEPPQRDRYRLDDGRRVRDLDRVLMGYQTYPQALTLVFDDVQGHDLMGSVTLDHFGEVPGGPARASQGREVQWQVFVPSAESREKLISLLARQWEALCGRELPVELTG.

An N-acetylalanine modification is found at Ala2. The necessary for binding to phosphoinositide-3-P; not sufficient for targeting to endosomes stretch occupies residues Ala2–Leu133. Residues Arg11–Glu121 form the PX domain. Residues Tyr120–Gly695 are necessary for homooligomerization and targeting to endosomes. The segment at Leu245 to Gln869 is interaction with PAK1. LRR repeat units lie at residues Ala288–Ile309, Lys311–Tyr332, Asn333–Leu354, Asn356–Tyr377, Ser378–Gly399, and Cys403–Val424. Residues Lys463–Arg478 show a composition bias toward basic and acidic residues. Disordered regions lie at residues Lys463–Leu501, Ser524–Ile547, Ser554–Glu573, and Arg628–Arg687. Residues Ser541, Ser543, and Ser546 each carry the phosphoserine modification. The stretch at Glu634–Gly695 forms a coiled coil. Acidic residues-rich tracts occupy residues Gln635–Val649 and Asp661–Glu685. Residues Pro660–Gln869 are interaction with LIMK. Positions Lys709–Leu807 are interaction with ITGA5. The disordered stretch occupies residues Thr1016–Ala1104. Ser1022 carries the phosphoserine modification. A compositionally biased stretch (basic and acidic residues) spans Pro1032–Pro1043. The span at Pro1063–Ala1078 shows a compositional bias: low complexity. At Thr1282 the chain carries Phosphothreonine. The residue at position 1284 (Ser1284) is a Phosphoserine.

As to quaternary structure, homooligomer. Interacts with GRB2. Interacts with PIK3R1; probably associates with the PI3-kinase complex. Interacts with IRS4. Found in a complex with ITGA5 and PAK1. Found in a complex with LIMK1 and PAK1. Interacts with ITGA5 (via cytoplasmic domain); this interaction is direct. Interacts with PAK1 (via kinase domain); this interaction is direct and is increased upon activation of PAK1. Interacts with LIMK1 (via PDZ and kinase domain); this interaction is direct. Interacts with LIMK2; this interaction depends on LIMK2 activity. Interacts with RAC1 (activated state). Interacts with STK11; this interaction may increase STK11 activity. As to expression, isoform 1, isoform 3 and isoform 4 are expressed in brain. Isoform 1 is expressed in endocrine tissues.

It is found in the cell membrane. Its subcellular location is the cytoplasm. The protein resides in the early endosome. It localises to the recycling endosome. Its function is as follows. Acts either as the functional imidazoline-1 receptor (I1R) candidate or as a membrane-associated mediator of the I1R signaling. Binds numerous imidazoline ligands that induces initiation of cell-signaling cascades triggering to cell survival, growth and migration. Its activation by the agonist rilmenidine induces an increase in phosphorylation of mitogen-activated protein kinases MAPK1 and MAPK3 in rostral ventrolateral medulla (RVLM) neurons that exhibited rilmenidine-evoked hypotension. Blocking its activation with efaroxan abolished rilmenidine-induced mitogen-activated protein kinase phosphorylation in RVLM neurons. Acts as a modulator of Rac-regulated signal transduction pathways. Suppresses Rac1-stimulated cell migration by interacting with PAK1 and inhibiting its kinase activity. Also blocks Pak-independent Rac signaling by interacting with RAC1 and inhibiting Rac1-stimulated NF-kB response element and cyclin D1 promoter activation. Also inhibits LIMK1 kinase activity by reducing LIMK1 'Tyr-508' phosphorylation. Inhibits Rac-induced cell migration and invasion in breast and colon epithelial cells. Inhibits lamellipodia formation, when overexpressed. Plays a role in protection against apoptosis. Involved in association with IRS4 in the enhancement of insulin activation of MAPK1 and MAPK3. When overexpressed, induces a redistribution of cell surface ITGA5 integrin to intracellular endosomal structures. This Homo sapiens (Human) protein is Nischarin (NISCH).